The primary structure comprises 553 residues: Transcription factor GAMYB (553 aa).

Residues 1–17 are compositionally biased toward basic and acidic residues; it reads MYRVKSESDCDMIHQEQ. Residues 1–45 form a disordered region; it reads MYRVKSESDCDMIHQEQMDSPVADDGSSGGSPHRGGGPPLKKGPW. Gly residues predominate over residues 27-38; the sequence is SSGGSPHRGGGP. HTH myb-type domains follow at residues 37 to 89 and 90 to 144; these read GPPL…ANHL and RPNL…KRCQ. 2 DNA-binding regions (H-T-H motif) span residues 65-89 and 117-140; these read WNAV…ANHL and WARM…NTRI. The segment at 464–489 is disordered; the sequence is PAQSTSMGSGEQVMGPKYEPGDTSPH.

In terms of assembly, interacts with MYBS1. In terms of tissue distribution, expressed in aleurone cells, inflorescence shoot apical region, stamen primordia, and tapetum cells of the anther. Expressed at low level in roots and vegetative shoots.

The protein resides in the nucleus. Transcriptional activator of gibberellin-dependent alpha-amylase expression in aleurone cells. Involved in pollen and floral organs development. May bind to the 5'-TAACAAA-3' box of alpha-amylase promoter. Required for anther development. Functions in parallel with UDT1 to regulate early anther development. Functions upstream of the transcription factor TDR and may positively regulate its transcription. Required for pollen development. Probably required for controlling tapetal cell size and promoting tapetal programmed cell death (PCD) during anther development. Required for exine and Ubisch body formation in anthers. Interacts with the DNA specific motifs of giberrellin-up-regulated genes of anthers and regulates their expression. Positively regulates the expression of the laurate hydroxylase CYP703A3, known to be essential for the development of pollen exine and anther epicuticular layer. Functions with MYBS1 to integrate diverse nutrient starvation and gibberellin (GA) signaling pathways during germination of grains. Sugar, nitrogen and phosphate starvation signals converge and interconnect with GA to promote the co-nuclear import of GAMYB and MYBS1, resulting in the expression of a large set of GA-inducible hydrolases, transporters and regulators that are essential for mobilization of nutrient reserves in the endosperm to support seedling growth. The sequence is that of Transcription factor GAMYB from Oryza sativa subsp. japonica (Rice).